The primary structure comprises 351 residues: GDP-mannose 4,6-dehydratase (351 aa).

NADP(+) contacts are provided by residues 11 to 16, 66 to 67, 88 to 92, and Tyr-103; these read GVTGQD, DM, and LAAQS. The active site involves Thr-135. Catalysis depends on nucleophile residues Glu-137 and Tyr-159. Lys-163, His-189, and Arg-194 together coordinate NADP(+).

The protein belongs to the NAD(P)-dependent epimerase/dehydratase family. GDP-mannose 4,6-dehydratase subfamily. NADP(+) serves as cofactor.

It carries out the reaction GDP-alpha-D-mannose = GDP-4-dehydro-alpha-D-rhamnose + H2O. Its pathway is nucleotide-sugar biosynthesis; GDP-L-fucose biosynthesis via de novo pathway; GDP-L-fucose from GDP-alpha-D-mannose: step 1/2. Its function is as follows. Catalyzes the conversion of GDP-D-mannose to GDP-4-dehydro-6-deoxy-D-mannose. This chain is GDP-mannose 4,6-dehydratase, found in Sinorhizobium fredii (strain HH103).